Consider the following 416-residue polypeptide: ASTRA-associated protein 1 (416 aa).

WD repeat units follow at residues 13–54, 58–95, 111–147, and 234–273; these read KHET…PFAG, ETKA…AVAI, VYEV…SESI, and HYPE…VNVS.

This sequence belongs to the WD repeat ASA1 family. As to quaternary structure, component of the ASTRA chromatin remodeling machinery complex.

The protein resides in the nucleus. Component of the ASTRA complex involved in chromatin remodeling. The polypeptide is ASTRA-associated protein 1 (ASA1) (Lachancea thermotolerans (strain ATCC 56472 / CBS 6340 / NRRL Y-8284) (Yeast)).